The sequence spans 255 residues: Dehydrogenase/reductase SDR family member 11 (255 aa).

An N-terminal signal peptide occupies residues 1–23 (MERWTGRVALVTGASVGIGAAVA). NADP(+) contacts are provided by residues 13–18 (GASVGI), 38–39 (RS), glutamate 44, 65–66 (DL), and asparagine 92. Substrate contacts are provided by serine 146 and tyrosine 161. NADP(+) is bound by residues tyrosine 161, lysine 165, 196–199 (VETG), and lysine 203. The active-site Proton acceptor is the tyrosine 161.

Belongs to the short-chain dehydrogenases/reductases (SDR) family.

The protein resides in the secreted. It catalyses the reaction a 3beta-hydroxysteroid + NADP(+) = a 3-oxosteroid + NADPH + H(+). The enzyme catalyses 17beta-estradiol + NAD(+) = estrone + NADH + H(+). The catalysed reaction is 17beta-estradiol + NADP(+) = estrone + NADPH + H(+). It participates in steroid biosynthesis; estrogen biosynthesis. Inhibited by flavonoids including apigenin, luteolin, genistein, kaempferol and quercetin and also by carbenoxolone, zearalenone, glycyrrhetinic, curcumin and flufenamic acid. Its function is as follows. Catalyzes the conversion of the 17-keto group of estrone, 4- and 5-androstenes and 5-alpha-androstanes into their 17-beta-hydroxyl metabolites and the conversion of the 3-keto group of 3-, 3,17- and 3,20- diketosteroids into their 3-hydroxyl metabolites. Exhibits reductive 3-beta-hydroxysteroid dehydrogenase activity toward 5-beta-androstanes, 5-beta-pregnanes, 4-pregnenes and bile acids. May also reduce endogenous and exogenous alpha-dicarbonyl compounds and xenobiotic alicyclic ketones. The sequence is that of Dehydrogenase/reductase SDR family member 11 (DHRS11) from Gallus gallus (Chicken).